A 178-amino-acid polypeptide reads, in one-letter code: MSLSSRLCLLTIVALILPSRGQTPKKPTSIFTADQTSATTRDNVPDPDQTSPGVQTTPLIWTREEATGSQTAAQTETQQLTKMATSNPVSDPGPHTSSKKGTPAVSRIEPLSPSKNFMPPSYIEHPLDSNENNPFYYDDTTLRKRGLLVAAVLFITGIIILTSGKCRQLSQFCLNRHR.

Residues 1–21 form the signal peptide; that stretch reads MSLSSRLCLLTIVALILPSRG. Over residues 21–59 the composition is skewed to polar residues; the sequence is GQTPKKPTSIFTADQTSATTRDNVPDPDQTSPGVQTTPL. Residues 21-130 form a disordered region; it reads GQTPKKPTSI…SYIEHPLDSN (110 aa). The Extracellular segment spans residues 22 to 145; sequence QTPKKPTSIF…YYDDTTLRKR (124 aa). A compositionally biased stretch (low complexity) spans 67 to 79; the sequence is TGSQTAAQTETQQ. Polar residues predominate over residues 80–100; that stretch reads LTKMATSNPVSDPGPHTSSKK. The helical transmembrane segment at 146-166 threads the bilayer; the sequence is GLLVAAVLFITGIIILTSGKC. Residues 167-178 lie on the Cytoplasmic side of the membrane; it reads RQLSQFCLNRHR.

This sequence belongs to the FXYD family. In terms of assembly, regulatory subunit of the sodium/potassium-transporting ATPase which is composed of a catalytic alpha subunit, a non-catalytic beta subunit and an additional regulatory subunit. The regulatory subunit, a member of the FXYD protein family, modulates the enzymatic activity in a tissue- and isoform-specific way by changing affinities of the Na+/K+-ATPase toward Na(+), K(+) or ATP. In terms of processing, glycosylated. In terms of tissue distribution, expressed mainly in epithelial tissue, such as lung, intestine and kidney. Not detected in brain, liver, muscle, and heart.

The protein resides in the cell membrane. The protein localises to the basolateral cell membrane. Associates with and regulates the activity of the sodium/potassium-transporting ATPase (NKA) which catalyzes the hydrolysis of ATP coupled with the exchange of Na(+) and K(+) ions across the plasma membrane. May increase NKA activity by increasing the apparent affinity for Na(+). Involved in down-regulation of E-cadherin which results in reduced cell adhesion. Promotes metastasis. The chain is FXYD domain-containing ion transport regulator 5 (Fxyd5) from Mus musculus (Mouse).